The chain runs to 312 residues: tRNA uridine(34) hydroxylase (312 aa).

One can recognise a Rhodanese domain in the interval 123–216; that stretch reads DRDDVVVLDV…YGIEQGGEDF (94 aa). Cys-176 (cysteine persulfide intermediate) is an active-site residue.

Belongs to the TrhO family.

The enzyme catalyses uridine(34) in tRNA + AH2 + O2 = 5-hydroxyuridine(34) in tRNA + A + H2O. In terms of biological role, catalyzes oxygen-dependent 5-hydroxyuridine (ho5U) modification at position 34 in tRNAs. The protein is tRNA uridine(34) hydroxylase of Cytophaga hutchinsonii (strain ATCC 33406 / DSM 1761 / CIP 103989 / NBRC 15051 / NCIMB 9469 / D465).